A 74-amino-acid chain; its full sequence is Large ribosomal subunit protein eL38B (74 aa).

This sequence belongs to the eukaryotic ribosomal protein eL38 family. In terms of assembly, component of the large ribosomal subunit (LSU). Mature yeast ribosomes consist of a small (40S) and a large (60S) subunit. The 40S small subunit contains 1 molecule of ribosomal RNA (18S rRNA) and at least 33 different proteins. The large 60S subunit contains 3 rRNA molecules (25S, 5.8S and 5S rRNA) and at least 46 different proteins.

The protein resides in the cytoplasm. Its function is as follows. Component of the ribosome, a large ribonucleoprotein complex responsible for the synthesis of proteins in the cell. The small ribosomal subunit (SSU) binds messenger RNAs (mRNAs) and translates the encoded message by selecting cognate aminoacyl-transfer RNA (tRNA) molecules. The large subunit (LSU) contains the ribosomal catalytic site termed the peptidyl transferase center (PTC), which catalyzes the formation of peptide bonds, thereby polymerizing the amino acids delivered by tRNAs into a polypeptide chain. The nascent polypeptides leave the ribosome through a tunnel in the LSU and interact with protein factors that function in enzymatic processing, targeting, and the membrane insertion of nascent chains at the exit of the ribosomal tunnel. This Schizosaccharomyces pombe (strain 972 / ATCC 24843) (Fission yeast) protein is Large ribosomal subunit protein eL38B (rpl3802).